A 647-amino-acid chain; its full sequence is Putative ankyrin repeat protein L764 (647 aa).

ANK repeat units follow at residues 123 to 154 (LKDREIYLNSNCDDINLIKFIVTRNDYFQINL), 202 to 231 (LTQEHIKLAVQNRKIPVLEHLINLGIEYDL), 233 to 256 (EIINDIKDFDILKYMLEIGNSLNE), 258 to 284 (NVNIIIFNIHTTQLIEYLMNLGYTINS), 289 to 319 (SMFSHMLIVSENTDIVEFLKSINAKDSDLTV), 348 to 377 (DCNLFLKYAIISQDIPNIEYSINKGADLKK), 401 to 431 (NDVNNFILKIIENDCIETLKYLVDNNYNIDL), 529 to 558 (FILKEFPEECSSEKMDTIKFLLDFNADNNE), and 588 to 617 (NGQNIVEYLISDGDHEIFRYLYYNGFDVKN).

The sequence is that of Putative ankyrin repeat protein L764 from Acanthamoeba polyphaga (Amoeba).